We begin with the raw amino-acid sequence, 235 residues long: Ribosomal RNA small subunit methyltransferase G (235 aa).

S-adenosyl-L-methionine contacts are provided by residues Gly98, Met103, 149–150 (VE), and Arg164.

This sequence belongs to the methyltransferase superfamily. RNA methyltransferase RsmG family.

It localises to the cytoplasm. It catalyses the reaction guanosine(527) in 16S rRNA + S-adenosyl-L-methionine = N(7)-methylguanosine(527) in 16S rRNA + S-adenosyl-L-homocysteine. Functionally, specifically methylates the N7 position of guanine in position 527 of 16S rRNA. In Cupriavidus metallidurans (strain ATCC 43123 / DSM 2839 / NBRC 102507 / CH34) (Ralstonia metallidurans), this protein is Ribosomal RNA small subunit methyltransferase G.